A 213-amino-acid chain; its full sequence is Calcium-dependent cell adhesion molecule 1 (213 aa).

4 repeat units span residues 1-48 (MSVD…LVGS), 49-97 (NVRC…GAFQ), 98-146 (WAVD…LTPP), and 147-194 (DSEI…FPKN). The interval 1-194 (MSVDANKVKF…IKKDETFPKN (194 aa)) is 4 X approximate tandem repeats.

Belongs to the Dictyostelium CAD family. Post-translationally, the N-terminus is blocked.

The protein localises to the cell membrane. In terms of biological role, mediates calcium-dependent cell-cell adhesion during the early stage of development. The polypeptide is Calcium-dependent cell adhesion molecule 1 (cadA) (Dictyostelium discoideum (Social amoeba)).